A 407-amino-acid chain; its full sequence is tRNA (uracil(54)-C(5))-methyltransferase (407 aa).

[4Fe-4S] cluster is bound by residues Cys-61, Cys-67, Cys-70, and Cys-137. S-adenosyl-L-methionine is bound by residues Gln-253, Tyr-279, Thr-284, 300–301, Asp-327, and Asp-341; that span reads DS. Catalysis depends on Cys-368, which acts as the Nucleophile. The Proton acceptor role is filled by Glu-400.

This sequence belongs to the class I-like SAM-binding methyltransferase superfamily. RNA M5U methyltransferase family.

It carries out the reaction uridine(54) in tRNA + S-adenosyl-L-methionine = 5-methyluridine(54) in tRNA + S-adenosyl-L-homocysteine + H(+). Catalyzes the formation of 5-methyl-uridine at position 54 (m5U54) in tRNA. The sequence is that of tRNA (uracil(54)-C(5))-methyltransferase from Pyrococcus horikoshii (strain ATCC 700860 / DSM 12428 / JCM 9974 / NBRC 100139 / OT-3).